A 190-amino-acid chain; its full sequence is 2-phospho-L-lactate guanylyltransferase (190 aa).

It belongs to the CofC family. As to quaternary structure, homodimer.

It catalyses the reaction (2S)-2-phospholactate + GTP + H(+) = (2S)-lactyl-2-diphospho-5'-guanosine + diphosphate. It functions in the pathway cofactor biosynthesis; coenzyme F420 biosynthesis. Functionally, guanylyltransferase that catalyzes the activation of (2S)-2-phospholactate (2-PL) as (2S)-lactyl-2-diphospho-5'-guanosine, via the condensation of 2-PL with GTP. It is involved in the biosynthesis of coenzyme F420, a hydride carrier cofactor. This chain is 2-phospho-L-lactate guanylyltransferase, found in Methanopyrus kandleri (strain AV19 / DSM 6324 / JCM 9639 / NBRC 100938).